The sequence spans 185 residues: ATP synthase subunit b 2 (185 aa).

A disordered region spans residues 1 to 23; sequence MAEGHGDAKGATAHTAADGGHKA. The span at 9–18 shows a compositional bias: low complexity; sequence KGATAHTAAD. A helical transmembrane segment spans residues 37-57; sequence LVSLTIAFVALYLIVSKIILP.

It belongs to the ATPase B chain family. F-type ATPases have 2 components, F(1) - the catalytic core - and F(0) - the membrane proton channel. F(1) has five subunits: alpha(3), beta(3), gamma(1), delta(1), epsilon(1). F(0) has three main subunits: a(1), b(2) and c(10-14). The alpha and beta chains form an alternating ring which encloses part of the gamma chain. F(1) is attached to F(0) by a central stalk formed by the gamma and epsilon chains, while a peripheral stalk is formed by the delta and b chains.

The protein localises to the cell inner membrane. In terms of biological role, f(1)F(0) ATP synthase produces ATP from ADP in the presence of a proton or sodium gradient. F-type ATPases consist of two structural domains, F(1) containing the extramembraneous catalytic core and F(0) containing the membrane proton channel, linked together by a central stalk and a peripheral stalk. During catalysis, ATP synthesis in the catalytic domain of F(1) is coupled via a rotary mechanism of the central stalk subunits to proton translocation. Its function is as follows. Component of the F(0) channel, it forms part of the peripheral stalk, linking F(1) to F(0). The b'-subunit is a diverged and duplicated form of b found in plants and photosynthetic bacteria. The chain is ATP synthase subunit b 2 (atpF2) from Rhodopseudomonas palustris (strain BisB5).